The primary structure comprises 188 residues: Elongation factor P (188 aa).

Belongs to the elongation factor P family.

Its subcellular location is the cytoplasm. It participates in protein biosynthesis; polypeptide chain elongation. Functionally, involved in peptide bond synthesis. Stimulates efficient translation and peptide-bond synthesis on native or reconstituted 70S ribosomes in vitro. Probably functions indirectly by altering the affinity of the ribosome for aminoacyl-tRNA, thus increasing their reactivity as acceptors for peptidyl transferase. This Chlorobium phaeobacteroides (strain DSM 266 / SMG 266 / 2430) protein is Elongation factor P.